Here is a 495-residue protein sequence, read N- to C-terminus: Probable serine/threonine-protein kinase DDB_G0292354 (495 aa).

In terms of domain architecture, Protein kinase spans 16–275 (WTVVKKIGQG…PNYVFLQTLL (260 aa)). Residues 22-30 (IGQGAFGEI) and K45 contribute to the ATP site. The active-site Proton acceptor is D136. Residues 293-469 (EVQTNSGASS…NGNGSNSQPI (177 aa)) are disordered. Composition is skewed to low complexity over residues 295–333 (QTNSGASSSSSNTTQQQQQQQQQQQQRNLNQSGLNNSSA) and 354–364 (NNSNNNNNNNN). Over residues 385–395 (ESNSQIANSSE) the composition is skewed to polar residues. A compositionally biased stretch (low complexity) spans 435–466 (SNNNNINNNNNNYNNNNNNNNNSHMNGNGSNS).

The protein belongs to the protein kinase superfamily. CK1 Ser/Thr protein kinase family.

The polypeptide is Probable serine/threonine-protein kinase DDB_G0292354 (Dictyostelium discoideum (Social amoeba)).